The chain runs to 622 residues: Leucine-rich repeat and immunoglobulin-like domain-containing nogo receptor-interacting protein 1-B (622 aa).

Residues 1 to 43 form the signal peptide; the sequence is MTFLQVTIKMVAREASGHSYLVACWQPILILMLGTVLSGSATG. 2 cysteine pairs are disulfide-bonded: Cys44–Cys50 and Cys48–Cys59. One can recognise an LRRNT domain in the interval 44 to 73; sequence CPSRCECSAQERSVVCHRRKLITLPEGIPI. The Extracellular portion of the chain corresponds to 44–563; the sequence is CPSRCECSAQ…FDMKTLIIAT (520 aa). LRR repeat units lie at residues 74 to 95, 98 to 119, 122 to 143, 146 to 167, 170 to 191, 194 to 215, 218 to 239, 266 to 287, 290 to 311, 314 to 335, and 338 to 359; these read DTRL…EFLN, QLED…AFSN, GLRT…VFTG, NLTR…MFQE, NLKE…AFHG, SLEQ…AFSH, NLLT…SFRR, NITT…AIQH, YLRF…KMHN, RLQA…SFKG, and YLRV…AFHS. Asn146 is a glycosylation site (N-linked (GlcNAc...) asparagine). Asn204 carries N-linked (GlcNAc...) asparagine glycosylation. 3 N-linked (GlcNAc...) asparagine glycosylation sites follow: Asn266, Asn276, and Asn295. Residue Asn343 is glycosylated (N-linked (GlcNAc...) asparagine). Residues 371–425 enclose the LRRCT domain; it reads NPLACDCRLLWVFRRRWRLNFNRQQPSCETPEFLQGKEFKDFPDVLPPNYFTCQK. Disulfide bonds link Cys375–Cys398, Cys377–Cys423, and Cys448–Cys499. The Ig-like C2-type domain maps to 413–515; the sequence is PDVLPPNYFT…GNDTRLAHLH (103 aa). 4 N-linked (GlcNAc...) asparagine glycosylation sites follow: Asn494, Asn507, Asn528, and Asn544. The chain crosses the membrane as a helical span at residues 564-584; sequence TMGFISFLGVVLFCLVLLFLW. Topologically, residues 585–622 are cytoplasmic; that stretch reads SRGKGNAKPNIEIEYVPRKVDGENSPNEGSHKISMKMI.

The protein localises to the cell membrane. In terms of biological role, may play a role in regulating axonal regeneration and plasticity in the adult central nervous system. In Danio rerio (Zebrafish), this protein is Leucine-rich repeat and immunoglobulin-like domain-containing nogo receptor-interacting protein 1-B (lingo1b).